We begin with the raw amino-acid sequence, 537 residues long: Beta-1-syntrophin (537 aa).

A2 carries the N-acetylalanine modification. PH domains are found at residues 18 to 297 (RAQR…SNAG) and 321 to 432 (EIRH…QGCH). 3 positions are modified to phosphoserine: S86, S125, and S204. Positions 111 to 194 (GVKVLKQELG…EVLLEVKYMR (84 aa)) constitute a PDZ domain. Residues 204–233 (SPVSEIGWETPPPESPRLGGGSAEPLSSQS) form a disordered region. The residue at position 213 (T213) is a Phosphothreonine. 5 positions are modified to phosphoserine: S218, S225, S231, S235, and S388. The SU domain maps to 481–537 (PYEKLKMSSDDGIRMLYLDFGGKEGEIQLDLHSCPKPIVFIIHSFLSAKITRLGLVA). The segment at 517-537 (PIVFIIHSFLSAKITRLGLVA) is calmodulin-binding.

The protein belongs to the syntrophin family. In terms of assembly, monomer and homodimer. Interacts with the viral HTLV-1 TAX protein and other members of the syntrophin family: SNTA1 and SNTB2. Interacts with the dystrophin protein DMD and related proteins DTNA and UTRN and with the sodium channel proteins SCN4A and SCN5A. Interacts with DTNB. Post-translationally, phosphorylated by CaM-kinase II. Ubiquitous. Expressed at high levels in the liver.

The protein localises to the cell membrane. It is found in the sarcolemma. The protein resides in the cell junction. Its subcellular location is the cytoplasm. It localises to the cytoskeleton. In terms of biological role, adapter protein that binds to and probably organizes the subcellular localization of a variety of membrane proteins. May link various receptors to the actin cytoskeleton and the dystrophin glycoprotein complex. This Mus musculus (Mouse) protein is Beta-1-syntrophin (Sntb1).